We begin with the raw amino-acid sequence, 183 residues long: Large ribosomal subunit protein bL25 (183 aa).

This sequence belongs to the bacterial ribosomal protein bL25 family. CTC subfamily. Part of the 50S ribosomal subunit; part of the 5S rRNA/L5/L18/L25 subcomplex. Contacts the 5S rRNA. Binds to the 5S rRNA independently of L5 and L18.

Functionally, this is one of the proteins that binds to the 5S RNA in the ribosome where it forms part of the central protuberance. This Desulfotalea psychrophila (strain LSv54 / DSM 12343) protein is Large ribosomal subunit protein bL25.